Here is a 567-residue protein sequence, read N- to C-terminus: Sensor histidine kinase MtrB (567 aa).

Basic residues predominate over residues 1 to 15 (MIFGSRRRIRGRRGR). The segment at 1-20 (MIFGSRRRIRGRRGRSGPMT) is disordered. 2 consecutive transmembrane segments (helical) span residues 42 to 62 (VVAL…FVLT) and 213 to 233 (GTMA…ALLV). An HAMP domain is found at 235 to 287 (RQVVVPVRSASRIAERFAEGHLSERMPVRGEDDMARLAVSFNDMAESLSRQIA). The region spanning 302–519 (DVSHELRTPL…CFRLTLPLVR (218 aa)) is the Histidine kinase domain. Histidine 305 is modified (phosphohistidine; by autocatalysis). The interval 526–567 (SPLPMKPIPQPVLQPVAQPNPQPMPPEYKERQRPREHAEWSG) is disordered. Residues 529 to 551 (PMKPIPQPVLQPVAQPNPQPMPP) are compositionally biased toward pro residues. A compositionally biased stretch (basic and acidic residues) spans 552–567 (EYKERQRPREHAEWSG).

Its subcellular location is the cell membrane. The catalysed reaction is ATP + protein L-histidine = ADP + protein N-phospho-L-histidine.. In terms of biological role, member of the two-component regulatory system MtrA/MtrB. Seems to function as a membrane-associated protein kinase that phosphorylates MtrA in response to environmental signals. This is Sensor histidine kinase MtrB (mtrB) from Mycobacterium bovis (strain ATCC BAA-935 / AF2122/97).